The following is a 278-amino-acid chain: Rhamnulose-1-phosphate aldolase (278 aa).

E116 is a catalytic residue. Positions 139, 141, and 210 each coordinate Zn(2+).

This sequence belongs to the aldolase class II family. RhaD subfamily. It depends on Zn(2+) as a cofactor.

It localises to the cytoplasm. It catalyses the reaction L-rhamnulose 1-phosphate = (S)-lactaldehyde + dihydroxyacetone phosphate. It functions in the pathway carbohydrate degradation; L-rhamnose degradation; glycerone phosphate from L-rhamnose: step 3/3. Catalyzes the reversible cleavage of L-rhamnulose-1-phosphate to dihydroxyacetone phosphate (DHAP) and L-lactaldehyde. The chain is Rhamnulose-1-phosphate aldolase from Listeria welshimeri serovar 6b (strain ATCC 35897 / DSM 20650 / CCUG 15529 / CIP 8149 / NCTC 11857 / SLCC 5334 / V8).